We begin with the raw amino-acid sequence, 681 residues long: PTS system glucose-specific EIICBA component (681 aa).

The 412-residue stretch at 3–414 folds into the PTS EIIC type-1 domain; sequence KKLFGQLQRI…LKYKTPGRED (412 aa). The next 10 helical transmembrane spans lie at 16–36, 73–93, 126–146, 170–190, 199–219, 273–293, 303–323, 328–348, 355–375, and 383–403; these read LMLPVAILPAAGLLLAIGTAI, MIFALGVAIGLAGGDGVAAIA, ILGIPTLQTGVFGGIIIGALA, FVPIMMATTSFILAFPMALIW, AFSTGLLDSNTGVAVFLFGFI, FMQGEFPVMMFGLPAAALAIY, VVAGLMGSAALTSFLTGITEP, FLFVAPLLFFIHAVLDGLSFL, VHLGYTFSGGFIDYVLLGVLP, and VIPVGLVYAVIYYFVFRFLIV. One can recognise a PTS EIIB type-1 domain in the interval 425–506; sequence TELPYAVLEA…QQIMNGQVVE (82 aa). Cys-447 functions as the Phosphocysteine intermediate; for EIIB activity in the catalytic mechanism. A PTS EIIA type-1 domain is found at 551–655; sequence DQVFSEKMMG…SDITPIIVTQ (105 aa). His-603 serves as the catalytic Tele-phosphohistidine intermediate; for EIIA activity.

It localises to the cell membrane. It catalyses the reaction N(pros)-phospho-L-histidyl-[protein] + D-glucose(out) = D-glucose 6-phosphate(in) + L-histidyl-[protein]. The phosphoenolpyruvate-dependent sugar phosphotransferase system (sugar PTS), a major carbohydrate active transport system, catalyzes the phosphorylation of incoming sugar substrates concomitantly with their translocation across the cell membrane. This system is involved in glucose transport. The protein is PTS system glucose-specific EIICBA component (ptsG) of Staphylococcus aureus (strain JH9).